Here is a 169-residue protein sequence, read N- to C-terminus: dCTP pyrophosphatase 1 (169 aa).

Positions 1-26 (MSASEEMLGGARGESTTATGPFSFSS) are disordered. Positions 14–26 (ESTTATGPFSFSS) are enriched in polar residues. Substrate contacts are provided by residues histidine 37 and 46–50 (WEQFH). Mg(2+) is bound by residues glutamate 62 and glutamate 65. Residue tryptophan 72 participates in substrate binding. A Phosphoserine modification is found at serine 84. 2 residues coordinate Mg(2+): glutamate 94 and aspartate 97. Tyrosine 101 is a binding site for substrate. The interval 143 to 169 (LPHGATSENQAMGPADPASESTGQVST) is disordered.

Homotetramer. It depends on Mg(2+) as a cofactor.

The protein localises to the cytoplasm. The protein resides in the cytosol. It catalyses the reaction dCTP + H2O = dCMP + diphosphate + H(+). Its function is as follows. Hydrolyzes deoxynucleoside triphosphates (dNTPs) to the corresponding nucleoside monophosphates. Has a strong preference for dCTP and its analogs including 5-iodo-dCTP and 5-methyl-dCTP for which it may even have a higher efficiency. May protect DNA or RNA against the incorporation of these genotoxic nucleotide analogs through their catabolism. The sequence is that of dCTP pyrophosphatase 1 from Bos taurus (Bovine).